Here is a 138-residue protein sequence, read N- to C-terminus: Small ribosomal subunit protein uS17 (138 aa).

Basic and acidic residues-rich tracts occupy residues Met1–Ala18 and Ala43–Thr55. Residues Met1–Glu62 form a disordered region.

Belongs to the universal ribosomal protein uS17 family. As to quaternary structure, part of the 30S ribosomal subunit.

Functionally, one of the primary rRNA binding proteins, it binds specifically to the 5'-end of 16S ribosomal RNA. The chain is Small ribosomal subunit protein uS17 from Rubrobacter xylanophilus (strain DSM 9941 / JCM 11954 / NBRC 16129 / PRD-1).